We begin with the raw amino-acid sequence, 332 residues long: Cyclin-D1-binding protein 1 (332 aa).

N-acetylalanine is present on alanine 2. Interaction with TCF3 regions lie at residues 2 to 184 (ASAT…VDFV) and 150 to 332 (ISYN…CLLD). Interaction with RPLP0 regions lie at residues 2 to 190 (ASAT…AHEE) and 240 to 332 (LIIP…CLLD). Residues 2–208 (ASATAPAAAA…DPYSGLLNDT (207 aa)) are required for interaction with CCND1.

This sequence belongs to the CCNDBP1 family. As to quaternary structure, interacts with CCND1 and GRAP2. May also interact with COPS5, RPLP0, SIRT6, SYF2 and TCF3. In terms of processing, phosphorylated.

The protein resides in the cytoplasm. The protein localises to the nucleus. Functionally, may negatively regulate cell cycle progression. May act at least in part via inhibition of the cyclin-D1/CDK4 complex, thereby preventing phosphorylation of RB1 and blocking E2F-dependent transcription. This Macaca fascicularis (Crab-eating macaque) protein is Cyclin-D1-binding protein 1 (CCNDBP1).